The chain runs to 407 residues: Substance-P receptor (407 aa).

A disordered region spans residues 1–20 (MDNVLPVDSDLFPNTSTNTS). Over 1–31 (MDNVLPVDSDLFPNTSTNTSESNQFVQPTWQ) the chain is Extracellular. N-linked (GlcNAc...) asparagine glycans are attached at residues Asn-14 and Asn-18. The chain crosses the membrane as a helical span at residues 32–54 (IVLWAAAYTVIVVTSVVGNVVVI). Residues 55-64 (WIILAHKRMR) lie on the Cytoplasmic side of the membrane. The chain crosses the membrane as a helical span at residues 65 to 86 (TVTNYFLVNLAFAEACMAAFNT). Topologically, residues 87–106 (VVNFTYAVHNVWYYGLFYCK) are extracellular. Cysteines 105 and 180 form a disulfide. A helical transmembrane segment spans residues 107 to 128 (FHNFFPIAALFASIYSMTAVAF). At 129–148 (DRYMAIIHPLQPRLSATATK) the chain is on the cytoplasmic side. The helical transmembrane segment at 149-169 (VVIFVIWVLALLLAFPQGYYS) threads the bilayer. At 170 to 194 (TTETMPSRVVCMIEWPEHPNRTYEK) the chain is on the extracellular side. A helical membrane pass occupies residues 195–219 (AYHICVTVLIYFLPLLVIGYAYTVV). Over 220–248 (GITLWASEIPGDSSDRYHEQVSAKRKVVK) the chain is Cytoplasmic. Residues 249–270 (MMIVVVCTFAICWLPFHIFFLL) form a helical membrane-spanning segment. The Extracellular portion of the chain corresponds to 271 to 283 (PYINPDLYLKKFI). The helical transmembrane segment at 284–308 (QQVYLASMWLAMSSTMYNPIIYCCL) threads the bilayer. Topologically, residues 309 to 407 (NDRFRLGFKH…SSSFYSNMLA (99 aa)) are cytoplasmic. Cys-322 carries the S-palmitoyl cysteine lipid modification. The segment at 362–407 (VGAHEDEPEEGPKATPSSLDLTSNGSSRSNSKTMTESSSFYSNMLA) is disordered. Positions 376 to 407 (TPSSLDLTSNGSSRSNSKTMTESSSFYSNMLA) are enriched in polar residues.

The protein belongs to the G-protein coupled receptor 1 family. Interacts with ARRB1.

It localises to the cell membrane. In terms of biological role, this is a receptor for the tachykinin neuropeptide substance P. It is probably associated with G proteins that activate a phosphatidylinositol-calcium second messenger system. The rank order of affinity of this receptor to tachykinins is: substance P &gt; substance K &gt; neuromedin K. This chain is Substance-P receptor (Tacr1), found in Mus musculus (Mouse).